A 178-amino-acid chain; its full sequence is Transcriptional repressor NrdR (178 aa).

Positions 1 to 21 are disordered; that stretch reads MRCPFCGHEDTQVKDSRPHED. Residues 3-34 fold into a zinc finger; sequence CPFCGHEDTQVKDSRPHEDGAAIRRRRICAAC. Basic and acidic residues predominate over residues 7–21; that stretch reads GHEDTQVKDSRPHED. Positions 49–139 constitute an ATP-cone domain; the sequence is LYVVKADDRR…VHWDFRETKD (91 aa).

Belongs to the NrdR family. It depends on Zn(2+) as a cofactor.

Its function is as follows. Negatively regulates transcription of bacterial ribonucleotide reductase nrd genes and operons by binding to NrdR-boxes. This Gluconacetobacter diazotrophicus (strain ATCC 49037 / DSM 5601 / CCUG 37298 / CIP 103539 / LMG 7603 / PAl5) protein is Transcriptional repressor NrdR.